We begin with the raw amino-acid sequence, 155 residues long: Pathogenesis-related protein STH-21 (155 aa).

This sequence belongs to the BetVI family.

The chain is Pathogenesis-related protein STH-21 (STH-21) from Solanum tuberosum (Potato).